The following is a 631-amino-acid chain: RING finger protein 112 (631 aa).

The segment at Cys-57 to Arg-98 adopts an RING-type zinc-finger fold. The interaction with ZBTB16 stretch occupies residues Ala-131 to Glu-631. The GB1/RHD3-type G domain occupies Asp-166–Pro-397. Arg-317–Asp-318 serves as a coordination point for GTP. Helical transmembrane passes span Leu-547 to Gly-567 and Gly-580 to Val-600.

Belongs to the TRAFAC class dynamin-like GTPase superfamily. GB1/RHD3 GTPase family. GB1 subfamily. In terms of assembly, self-associates. Interacts with SP1 in an oxidative stress-regulated manner. Interacts with SIGMAR1 in an oxidative stress-regulated manner. Interacts with ZBTB16 (via C2H2-type zinc finger domains 1 and 2). Auto-ubiquitinated. As to expression, predominantly expressed in brain.

It is found in the membrane. The protein localises to the cytoplasm. Its subcellular location is the nucleus. It localises to the nuclear body. The protein resides in the nucleoplasm. It is found in the endosome. The protein localises to the cytoplasmic vesicle. Its subcellular location is the secretory vesicle. It localises to the synaptic vesicle. The protein resides in the postsynaptic density. It is found in the perikaryon. The protein localises to the cell projection. Its subcellular location is the neuron projection. It carries out the reaction S-ubiquitinyl-[E2 ubiquitin-conjugating enzyme]-L-cysteine + [acceptor protein]-L-lysine = [E2 ubiquitin-conjugating enzyme]-L-cysteine + N(6)-ubiquitinyl-[acceptor protein]-L-lysine.. It functions in the pathway protein modification; protein ubiquitination. Its function is as follows. E3 ubiquitin-protein ligase that plays an important role in neuronal differentiation, including neurogenesis and gliogenesis, during brain development. During embryonic development initiates neuronal differentiation by inducing cell cycle arrest at the G0/G1 phase through up-regulation of cell-cycle regulatory proteins. Plays a role not only in the fetal period during the development of the nervous system, but also in the adult brain, where it is involved in the maintenance of neural functions and protection of the nervous tissue cells from oxidative stress-induced damage. Exhibits GTPase and E3 ubiquitin-protein ligase activities. Regulates dendritic spine density and synaptic neurotransmission; its ability to hydrolyze GTP is involved in the maintenance of dendritic spine density. The polypeptide is RING finger protein 112 (Rnf112) (Rattus norvegicus (Rat)).